A 112-amino-acid polypeptide reads, in one-letter code: Protein NIM1-INTERACTING 3 (112 aa).

2 disordered regions span residues 1–20 (MDRDRKRVKMEKEDDEEEKM) and 77–112 (EKAANESSSASNEYDGSKEKQEGSETNVCLDLNLSL). Coiled coils occupy residues 1–35 (MDRDRKRVKMEKEDDEEEKMEKLYTVLKNAREMRK) and 69–96 (NKAEANNIEKAANESSSASNEYDGSKEK). A compositionally biased stretch (low complexity) spans 77-89 (EKAANESSSASNE).

The protein belongs to the NPR1-interactor family. Interacts with NPR1 C-terminal region.

It localises to the nucleus. The polypeptide is Protein NIM1-INTERACTING 3 (Arabidopsis thaliana (Mouse-ear cress)).